Consider the following 273-residue polypeptide: Tryptase-2 (273 aa).

The N-terminal stretch at 1–18 (MLHLLALALLLSLVSAAP) is a signal peptide. A propeptide spans 19–28 (APGQALQRSG) (activation peptide). Residues 29-270 (IIGGKEAPGS…YLDWIHQYVP (242 aa)) enclose the Peptidase S1 domain. An intrachain disulfide couples C57 to C73. Residues H72 and D119 each act as charge relay system in the active site. 3 disulfide bridges follow: C153–C228, C186–C209, and C218–C246. S222 (charge relay system) is an active-site residue. An N-linked (GlcNAc...) asparagine glycan is attached at N231.

The protein belongs to the peptidase S1 family. Tryptase subfamily. As to quaternary structure, homotetramer.

The protein resides in the secreted. It catalyses the reaction Preferential cleavage: Arg-|-Xaa, Lys-|-Xaa, but with more restricted specificity than trypsin.. Tryptase is the major neutral protease present in mast cells and is secreted upon the coupled activation-degranulation response of this cell type. The chain is Tryptase-2 from Ovis aries (Sheep).